The following is a 454-amino-acid chain: uncharacterized protein (454 aa).

Positions 1-18 (MRRFTLFVFFLSISIAYA) are cleaved as a signal peptide.

This is an uncharacterized protein from Caenorhabditis elegans.